The sequence spans 276 residues: Undecaprenyl-diphosphatase 2 (276 aa).

The next 8 membrane-spanning stretches (helical) occupy residues 1–21, 44–64, 87–107, 114–134, 150–170, 190–210, 222–242, and 251–271; these read MSLW…LFPV, QLLP…LWYF, GHLM…GLLL, VFHD…LLWL, LTFK…IPGF, AAEF…LLEL, DALL…RFLM, and LASF…WFMF.

It belongs to the UppP family.

Its subcellular location is the cell inner membrane. The enzyme catalyses di-trans,octa-cis-undecaprenyl diphosphate + H2O = di-trans,octa-cis-undecaprenyl phosphate + phosphate + H(+). Catalyzes the dephosphorylation of undecaprenyl diphosphate (UPP). Confers resistance to bacitracin. In Burkholderia thailandensis (strain ATCC 700388 / DSM 13276 / CCUG 48851 / CIP 106301 / E264), this protein is Undecaprenyl-diphosphatase 2.